The chain runs to 208 residues: Uracil phosphoribosyltransferase (208 aa).

Residues Arg-78, Arg-103, and 130–138 contribute to the 5-phospho-alpha-D-ribose 1-diphosphate site; that span reads DPMLATGGS. Residues Ile-193 and 198 to 200 contribute to the uracil site; that span reads GDA. Position 199 (Asp-199) interacts with 5-phospho-alpha-D-ribose 1-diphosphate.

Belongs to the UPRTase family. Mg(2+) is required as a cofactor.

The catalysed reaction is UMP + diphosphate = 5-phospho-alpha-D-ribose 1-diphosphate + uracil. It participates in pyrimidine metabolism; UMP biosynthesis via salvage pathway; UMP from uracil: step 1/1. With respect to regulation, allosterically activated by GTP. Catalyzes the conversion of uracil and 5-phospho-alpha-D-ribose 1-diphosphate (PRPP) to UMP and diphosphate. The protein is Uracil phosphoribosyltransferase of Mannheimia succiniciproducens (strain KCTC 0769BP / MBEL55E).